The primary structure comprises 478 residues: Cysteine--tRNA ligase (478 aa).

A Zn(2+)-binding site is contributed by cysteine 37. The 'HIGH' region motif lies at 39–49 (PTVYHYAHIGN). Zn(2+) is bound by residues cysteine 224, histidine 249, and glutamate 253. Positions 281 to 285 (KMSKS) match the 'KMSKS' region motif. Position 284 (lysine 284) interacts with ATP.

This sequence belongs to the class-I aminoacyl-tRNA synthetase family. As to quaternary structure, monomer. The cofactor is Zn(2+).

It localises to the cytoplasm. It carries out the reaction tRNA(Cys) + L-cysteine + ATP = L-cysteinyl-tRNA(Cys) + AMP + diphosphate. This chain is Cysteine--tRNA ligase, found in Protochlamydia amoebophila (strain UWE25).